Reading from the N-terminus, the 318-residue chain is Biotin synthase (318 aa).

Positions 36 to 258 constitute a Radical SAM core domain; that stretch reads HDPREVQLCT…VATTRILFPD (223 aa). Residues Cys-54, Cys-58, and Cys-61 each contribute to the [4Fe-4S] cluster site. Residues Cys-98, Cys-130, Cys-190, and Arg-262 each contribute to the [2Fe-2S] cluster site.

It belongs to the radical SAM superfamily. Biotin synthase family. As to quaternary structure, homodimer. The cofactor is [4Fe-4S] cluster. [2Fe-2S] cluster is required as a cofactor.

The enzyme catalyses (4R,5S)-dethiobiotin + (sulfur carrier)-SH + 2 reduced [2Fe-2S]-[ferredoxin] + 2 S-adenosyl-L-methionine = (sulfur carrier)-H + biotin + 2 5'-deoxyadenosine + 2 L-methionine + 2 oxidized [2Fe-2S]-[ferredoxin]. It functions in the pathway cofactor biosynthesis; biotin biosynthesis; biotin from 7,8-diaminononanoate: step 2/2. Catalyzes the conversion of dethiobiotin (DTB) to biotin by the insertion of a sulfur atom into dethiobiotin via a radical-based mechanism. The polypeptide is Biotin synthase (Gloeobacter violaceus (strain ATCC 29082 / PCC 7421)).